The following is a 67-amino-acid chain: MWRIWRLFDPMRAMVAQAVFLLGLAVLIHLMLLGTNKYNWLDGAKKAPAATAVAPVPAEVTSLAQAK.

Met1 is subject to N-formylmethionine; in strain DSM 149 and DSM 151. The Cytoplasmic segment spans residues 1 to 12 (MWRIWRLFDPMR). Residues 13–33 (AMVAQAVFLLGLAVLIHLMLL) form a helical membrane-spanning segment. His29 provides a ligand contact to a bacteriochlorophyll. Residues 34 to 67 (GTNKYNWLDGAKKAPAATAVAPVPAEVTSLAQAK) lie on the Periplasmic side of the membrane.

This sequence belongs to the antenna complex alpha subunit family. As to quaternary structure, an alpha/beta heterodimer. The core complex is formed by different alpha and beta chains, binding bacteriochlorophyll molecules, and arranged most probably in tetrameric structures disposed around the reaction center. The non-pigmented gamma chains may constitute additional components. In terms of processing, the N-terminus is blocked.

Its subcellular location is the cell inner membrane. Functionally, antenna complexes are light-harvesting systems, which transfer the excitation energy to the reaction centers. The polypeptide is Light-harvesting protein B-870 alpha chain (pufA) (Rubrivivax gelatinosus (Rhodocyclus gelatinosus)).